Consider the following 118-residue polypeptide: Sarafotoxin-i1 (118 aa).

Residues 1–23 (MALLPRLAAGGLLLLLALAALDG) form the signal peptide. The propeptide occupies 24 to 84 (KPAPPKLLQK…LSPLRKPQPL (61 aa)). Disulfide bonds link Cys-85–Cys-99 and Cys-87–Cys-95. Residues 112-118 (PSPIQSS) constitute a propeptide that is removed on maturation.

The protein belongs to the endothelin/sarafotoxin family. Post-translationally, different length molecules ranging from 15 (85-99) to 30 amino acids (85-114) have been found in the venom. Expressed by the venom gland.

The protein localises to the secreted. Its function is as follows. Vasoconstrictor activity. These toxins cause cardiac arrest probably as a result of coronary vasospasm. Functionally, sarafotoxin-i3: vasoconstrictor activity. Causes cardiac arrest probably as a result of coronary vasospasm. Displays low agonistic activities towards endothelin-2 receptor (EDNRB) (displays affinity in the micromolar range). The chain is Sarafotoxin-i1 from Atractaspis irregularis (Variable burrowing asp).